A 466-amino-acid polypeptide reads, in one-letter code: GTPase Der (466 aa).

EngA-type G domains are found at residues 30-193 (PVVA…PEVS) and 203-376 (RRVA…ASWD). Residues 36–43 (GRPNVGKS), 83–87 (DTGGW), 145–148 (NKVD), 209–216 (GKPNVGKS), 256–260 (DTAGL), and 321–324 (NKWD) each bind GTP. A KH-like domain is found at 377-459 (TRIATGPLNS…PIRINVRVRE (83 aa)).

Belongs to the TRAFAC class TrmE-Era-EngA-EngB-Septin-like GTPase superfamily. EngA (Der) GTPase family. Associates with the 50S ribosomal subunit.

Functionally, GTPase that plays an essential role in the late steps of ribosome biogenesis. This chain is GTPase Der, found in Mycobacterium avium (strain 104).